The sequence spans 807 residues: Spondin-1 (807 aa).

The first 28 residues, methionine 1–alanine 28, serve as a signal peptide directing secretion. The Reelin domain maps to phenylalanine 29–lysine 194. 17 cysteine pairs are disulfide-bonded: cysteine 44/cysteine 128, cysteine 156/cysteine 182, cysteine 199/cysteine 336, cysteine 200/cysteine 340, cysteine 202/cysteine 415, cysteine 443/cysteine 480, cysteine 454/cysteine 489, cysteine 459/cysteine 494, cysteine 502/cysteine 538, cysteine 513/cysteine 517, cysteine 548/cysteine 554, cysteine 559/cysteine 595, cysteine 570/cysteine 574, cysteine 605/cysteine 610, cysteine 615/cysteine 650, cysteine 626/cysteine 630, and cysteine 660/cysteine 665. The Spondin domain occupies proline 195 to proline 388. N-linked (GlcNAc...) asparagine glycosylation occurs at asparagine 214. Aspartate 325, aspartate 354, and aspartate 358 together coordinate Ca(2+). TSP type-1 domains are found at residues threonine 442–serine 495, threonine 501–serine 555, serine 558–histidine 611, proline 614–proline 666, aspartate 668–leucine 721, and glycine 754–proline 806. A C-linked (Man) tryptophan glycan is attached at tryptophan 448. Tryptophan 451 is a glycosylation site (C-linked (Man) tryptophan; partial). A glycan (C-linked (Man) tryptophan) is linked at tryptophan 507. C-linked (Man) tryptophan; partial glycosylation is present at tryptophan 510. C-linked (Man) tryptophan glycosylation occurs at tryptophan 564. A glycan (C-linked (Man) tryptophan; partial) is linked at tryptophan 620. Tryptophan 623 carries C-linked (Man) tryptophan glycosylation. Tryptophan 674 carries a C-linked (Man) tryptophan glycan. Asparagine 681 carries N-linked (GlcNAc...) asparagine glycosylation.

As to quaternary structure, binds to the central extracellular domain of APP and inhibits beta-secretase cleavage of APP. In terms of tissue distribution, highest expression in lung, lower expression in brain, heart, kidney, liver and testis, and lowest expression in pancreas, skeletal muscle and ovary. Not expressed in spleen.

The protein localises to the secreted. The protein resides in the extracellular space. It is found in the extracellular matrix. Cell adhesion protein that promotes the attachment of spinal cord and sensory neuron cells and the outgrowth of neurites in vitro. May contribute to the growth and guidance of axons in both the spinal cord and the PNS. Major factor for vascular smooth muscle cell. The chain is Spondin-1 (SPON1) from Homo sapiens (Human).